The sequence spans 360 residues: Photosystem II protein D1 (360 aa).

3 consecutive transmembrane segments (helical) span residues 29–46, 118–133, and 142–156; these read YVGW…TATT, QFLI…QWEL, and WICV…ARTA. Tyrosine 126 is a pheophytin a binding site. [CaMn4O5] cluster is bound by residues aspartate 170 and glutamate 189. Residues 197–218 form a helical membrane-spanning segment; the sequence is FHMLGVAGVFGGSLFSAMHGSL. A chlorophyll a-binding site is contributed by histidine 198. A quinone-binding positions include histidine 215 and 264 to 265; that span reads SF. Histidine 215 is a binding site for Fe cation. Residue histidine 272 participates in Fe cation binding. A helical membrane pass occupies residues 274-288; the sequence is FLGAWPVIGIWFTAM. The [CaMn4O5] cluster site is built by histidine 332, glutamate 333, aspartate 342, and alanine 344. The propeptide occupies 345 to 360; that stretch reads SGEQAPVALTAPAING.

Belongs to the reaction center PufL/M/PsbA/D family. PSII is composed of 1 copy each of membrane proteins PsbA, PsbB, PsbC, PsbD, PsbE, PsbF, PsbH, PsbI, PsbJ, PsbK, PsbL, PsbM, PsbT, PsbX, PsbY, PsbZ, Psb30/Ycf12, peripheral proteins PsbO, CyanoQ (PsbQ), PsbU, PsbV and a large number of cofactors. It forms dimeric complexes. The D1/D2 heterodimer binds P680, chlorophylls that are the primary electron donor of PSII, and subsequent electron acceptors. It shares a non-heme iron and each subunit binds pheophytin, quinone, additional chlorophylls, carotenoids and lipids. D1 provides most of the ligands for the Mn4-Ca-O5 cluster of the oxygen-evolving complex (OEC). There is also a Cl(-1) ion associated with D1 and D2, which is required for oxygen evolution. The PSII complex binds additional chlorophylls, carotenoids and specific lipids. is required as a cofactor. In terms of processing, tyr-161 forms a radical intermediate that is referred to as redox-active TyrZ, YZ or Y-Z. Post-translationally, C-terminally processed by CtpA; processing is essential to allow assembly of the oxygen-evolving complex and thus photosynthetic growth.

The protein localises to the cellular thylakoid membrane. The catalysed reaction is 2 a plastoquinone + 4 hnu + 2 H2O = 2 a plastoquinol + O2. In terms of biological role, photosystem II (PSII) is a light-driven water:plastoquinone oxidoreductase that uses light energy to abstract electrons from H(2)O, generating O(2) and a proton gradient subsequently used for ATP formation. It consists of a core antenna complex that captures photons, and an electron transfer chain that converts photonic excitation into a charge separation. The D1/D2 (PsbA/PsbD) reaction center heterodimer binds P680, the primary electron donor of PSII as well as several subsequent electron acceptors. In Synechocystis sp. (strain PCC 6714) (Aphanocapsa sp. (strain PCC 6714)), this protein is Photosystem II protein D1.